The primary structure comprises 318 residues: Putative HTH-type transcriptional regulatory protein TK0539 (318 aa).

The 59-residue stretch at 131–189 (LRELREKHGYSVNELAQLLGVSRKSLLNYERGEQAVSLDVAIQLEEIFDEALAEPIDIL) folds into the HTH cro/C1-type domain. Residues 142–161 (VNELAQLLGVSRKSLLNYER) constitute a DNA-binding region (H-T-H motif).

In Thermococcus kodakarensis (strain ATCC BAA-918 / JCM 12380 / KOD1) (Pyrococcus kodakaraensis (strain KOD1)), this protein is Putative HTH-type transcriptional regulatory protein TK0539.